Consider the following 1231-residue polypeptide: MAALGLLLQAAAACGSAGPLRLGRCYRGARGLCTRLAEPDGLEGARQEDEEEQPPPPGAEEQSTAMVKDSRDLLKEFPQPKNLLNSVIGRALGISHARDKLVYIHTNGPRKKKVTLHIKWPKNVEVEGYGTKKIDAERQAAAAACQLFKGWGLLGPRNELFDAAKYRLLADQLGCPDERWCSEGKWRSKSGPSLADLSTCWRRMEPDDPIQPMEQGRMPKAMRREELEEGELEEGELEEGELEEEAIDVSDYLPMAHQDARTPGRDASRGGSSIEMTDDNTAIRALTQFPLPKNLLAQVIQIATSSSTVKEYMQFRTVGTKTKICKLTLRWPCPMTFAAKGRRKVEAENKAAALACQKLKSLGLVDKNNNPLSHAMYNMTSLRELGENQRKPCHIKVPEATLRKIENYLNHYPVDIRESRPRIADDMMNLSKESGAISDAITGKTYIPMLEAEEVRLSQNLLALWKRRGSSWQESHPLPVDPHKDTILSAIEQNPVVVIAGDTGCGKTTRIPQLLLEHYILEGRGARCNVVITQPRRISAISVAQRVAQELGPNMRKNVGYQVRLESKPPARGGALLFCTVGILLRKLQGNPSLEGVSHVVVDEVHERDVNTDFLLILLKGIQKLNPDLRLVLMSATGDNQRFSHYFGGCPVVKVPGFMYPVKEYYLEEILAKLGRHRHRHYEIKQSDDECVLDLDLITDLVLQIDAHGEPGGILCFLPGWQEIKGVQQRLLEMLGSQNSRYLVLPVHSNIPMMDQQNIFQRPPPGVRKIVLATNIAETSITINDIVHVVDSGTHKEERYDLKTKVSCLETVWVSKSNVVQRRGRAGRCQSGFAYHLFPRSRLDKMPTYQVPEILRTPLENLVVQAKIHMPEKTAVEFLSKALDSPDIKAVDEAVILLQEIGVLDQREALTTLGKRLAQISTDPRLAKAIVLASIYRCLHPLLVIVSCLTRDPFSSSLQNRAEVDKAKAVLSRESGSDHLAFVRAVAGWEEVLRRRDSRARDNYLQDYYLYGPSLRFINGLVKQFSENLYEAFLVSSPSDCTMPSSVCNQYSEEEELVKGVLMAGLYPNLIQVRQGKVTRQGKFKPNSYAYRTKAGTVLLHKSTINREASKLYSRWLTYFMAVKSNGGVFVRDSSQVHPLAVLLMTDTDIHVRDDGWRATVSLTDSDLLVLEGDSYTIRLLRDFRVSLSKMVETCLCYEMAAIPGDLHHQHSQLLDILVDLLKGPPGSFGA.

The tract at residues 39–65 is disordered; it reads PDGLEGARQEDEEEQPPPPGAEEQSTA. DRBM domains follow at residues 80–148 and 292–359; these read PKNL…CQLF and PKNL…CQKL. The Helicase ATP-binding domain occupies 488 to 656; it reads LSAIEQNPVV…FGGCPVVKVP (169 aa). Residue 501 to 508 participates in ATP binding; that stretch reads GDTGCGKT. The DEAH box signature appears at 603-606; that stretch reads DEVH. In terms of domain architecture, Helicase C-terminal spans 697–870; the sequence is LITDLVLQID…NLVVQAKIHM (174 aa).

Belongs to the DEAD box helicase family. DEAH subfamily.

It is found in the cytoplasm. The protein localises to the mitochondrion. It localises to the mitochondrion matrix. Its subcellular location is the mitochondrion nucleoid. It catalyses the reaction ATP + H2O = ADP + phosphate + H(+). Functionally, RNA-dependent helicase. Plays an important role in the assembly of the mitochondrial large ribosomal subunit. Required for optimal function of the zinc-finger antiviral protein ZC3HAV1. Associates with mitochondrial DNA. Involved in nervous system development and differentiation through its involvement in the up-regulation of a number of genes which are required for neurogenesis, including GSC, NCAM1, neurogenin, and NEUROD. This Gallus gallus (Chicken) protein is ATP-dependent RNA helicase DHX30 (DHX30).